The chain runs to 407 residues: TOM1-like protein 1 (407 aa).

Gly-2 carries the post-translational modification N-acetylglycine. The 129-residue stretch at 55–183 (ATTENLEEPD…SLKARGIRFP (129 aa)) folds into the VHS domain. Residues 228 to 315 (FTAEQTKEAF…TLSKYEEMNK (88 aa)) form the GAT domain. The tract at residues 315–407 (KPSAPLTSHE…SSKNDDLIRF (93 aa)) is disordered. Ser-337 carries the post-translational modification Phosphoserine. The segment covering 337-347 (SPIHGREESLV) has biased composition (basic and acidic residues). Positions 353–364 (VRGGFHGGGGSG) are enriched in gly residues. Basic and acidic residues predominate over residues 388–407 (PDHDPKKEQSSSKNDDLIRF).

The protein belongs to the TOM1 family. Ubiquitously expressed.

The protein localises to the membrane. Might contribute to the loading of the ESCRT machinery. This is TOM1-like protein 1 from Arabidopsis thaliana (Mouse-ear cress).